The chain runs to 427 residues: Enolase (427 aa).

Gln-162 is a binding site for (2R)-2-phosphoglycerate. Residue Glu-204 is the Proton donor of the active site. Mg(2+)-binding residues include Asp-241, Glu-282, and Asp-309. Positions 334, 363, 364, and 385 each coordinate (2R)-2-phosphoglycerate. Catalysis depends on Lys-334, which acts as the Proton acceptor.

It belongs to the enolase family. Mg(2+) serves as cofactor.

Its subcellular location is the cytoplasm. The protein resides in the secreted. The protein localises to the cell surface. It catalyses the reaction (2R)-2-phosphoglycerate = phosphoenolpyruvate + H2O. It functions in the pathway carbohydrate degradation; glycolysis; pyruvate from D-glyceraldehyde 3-phosphate: step 4/5. Its function is as follows. Catalyzes the reversible conversion of 2-phosphoglycerate (2-PG) into phosphoenolpyruvate (PEP). It is essential for the degradation of carbohydrates via glycolysis. This chain is Enolase, found in Parafrankia sp. (strain EAN1pec).